The primary structure comprises 360 residues: UDP-N-acetylglucosamine--N-acetylmuramyl-(pentapeptide) pyrophosphoryl-undecaprenol N-acetylglucosamine transferase (360 aa).

Ser-198 and Gln-289 together coordinate UDP-N-acetyl-alpha-D-glucosamine.

It belongs to the glycosyltransferase 28 family. MurG subfamily.

The protein localises to the cell membrane. It catalyses the reaction Mur2Ac(oyl-L-Ala-gamma-D-Glu-L-Lys-D-Ala-D-Ala)-di-trans,octa-cis-undecaprenyl diphosphate + UDP-N-acetyl-alpha-D-glucosamine = beta-D-GlcNAc-(1-&gt;4)-Mur2Ac(oyl-L-Ala-gamma-D-Glu-L-Lys-D-Ala-D-Ala)-di-trans,octa-cis-undecaprenyl diphosphate + UDP + H(+). It functions in the pathway cell wall biogenesis; peptidoglycan biosynthesis. Functionally, cell wall formation. Catalyzes the transfer of a GlcNAc subunit on undecaprenyl-pyrophosphoryl-MurNAc-pentapeptide (lipid intermediate I) to form undecaprenyl-pyrophosphoryl-MurNAc-(pentapeptide)GlcNAc (lipid intermediate II). This Streptococcus pyogenes serotype M6 (strain ATCC BAA-946 / MGAS10394) protein is UDP-N-acetylglucosamine--N-acetylmuramyl-(pentapeptide) pyrophosphoryl-undecaprenol N-acetylglucosamine transferase.